Here is a 479-residue protein sequence, read N- to C-terminus: Probable xyloglucan galactosyltransferase GT15 (479 aa).

The Cytoplasmic segment spans residues 1 to 20; the sequence is MKNNNSSSVSIENHPWKKKP. The chain crosses the membrane as a helical; Signal-anchor for type II membrane protein span at residues 21 to 40; it reads TTLLLFLSLLSISLLLLRLS. At 41 to 479 the chain is on the lumenal side; the sequence is QDKIILITTT…GIRRNEFKTD (439 aa). 4 N-linked (GlcNAc...) asparagine glycosylation sites follow: N155, N242, N285, and N391.

It belongs to the glycosyltransferase 47 family. In terms of tissue distribution, expressed in roots, hypocotyls, cotyledons, leaves, stems and sepals.

It is found in the golgi apparatus membrane. Its function is as follows. Functions in xyloglucan synthesis by adding side chains to the xylosylated glucan backbone. Involved in the galactosylation of hemicellulose xyloglucan. This chain is Probable xyloglucan galactosyltransferase GT15, found in Arabidopsis thaliana (Mouse-ear cress).